We begin with the raw amino-acid sequence, 106 residues long: uncharacterized protein (106 aa).

The N-terminal stretch at 1 to 31 (MNNERLMLKGIFLGAAAGAALSLLHKPTRQA) is a signal peptide. A coiled-coil region spans residues 57-89 (VITKVDEAKKLARTLSKEVDFVNQQVKELKKTT).

This is an uncharacterized protein from Bacillus subtilis (strain 168).